The sequence spans 849 residues: Neprilysin-1 (849 aa).

At 1–113 (MSQQHEATAA…LKESQQRRRL (113 aa)) the chain is on the cytoplasmic side. Low complexity predominate over residues 41-61 (QQQVQHQAPHQMQQQQQQQQQ). The segment at 41–63 (QQQVQHQAPHQMQQQQQQQQQNK) is disordered. The chain crosses the membrane as a helical; Signal-anchor for type II membrane protein span at residues 114 to 134 (LVLAIAFTVLGAAIGALAIYF). Residues 135-849 (ASVHQRCHLY…MNPAEKCSVW (715 aa)) are Extracellular-facing. The span at 146-155 (LEPDNDDRPN) shows a compositional bias: basic and acidic residues. Residues 146–167 (LEPDNDDRPNGRWNQDSGSAHE) are disordered. Residues 172-849 (ICMTQECVRT…MNPAEKCSVW (678 aa)) form the Peptidase M13 domain. Cystine bridges form between Cys173/Cys178, Cys196/Cys834, Cys204/Cys794, Cys260/Cys512, and Cys721/Cys846. N-linked (GlcNAc...) asparagine glycosylation is found at Asn309, Asn326, Asn393, Asn589, and Asn599. Zn(2+) is bound at residue His684. Glu685 is a catalytic residue. His688 serves as a coordination point for Zn(2+). The N-linked (GlcNAc...) asparagine glycan is linked to Asn709. Glu746 contacts Zn(2+). Asp750 functions as the Proton donor in the catalytic mechanism. N-linked (GlcNAc...) asparagine glycosylation occurs at Asn778.

Belongs to the peptidase M13 family. The cofactor is Zn(2+). In terms of tissue distribution, expressed in the testicular tube, near and in the seminal vesicles. In adults and third-instar larvae, expressed in the midgut and in the mushroom bodies of the brain and neurons in the pars intercerebralis. Also expressed in neurons of the ventral ganglion and imaginal disks (wing and leg) of third-instar larvae. In stage 17 embryos, expressed in the peripheral nervous system, pharynx and midgut.

It is found in the cell membrane. It carries out the reaction Preferential cleavage of polypeptides between hydrophobic residues, particularly with Phe or Tyr at P1'.. In terms of biological role, metalloendoprotease which functions in fertility and memory formation. Required in the dorsal paired medial neurons and alpha/beta mushroom body neurons for the proper formation of long-term and middle-term memories. Required in males to maximise egg-laying in female mates and is also required in females for their fertility. This Drosophila melanogaster (Fruit fly) protein is Neprilysin-1.